We begin with the raw amino-acid sequence, 476 residues long: Eukaryotic translation initiation factor 3 subunit L (476 aa).

A PCI domain is found at Asp-257 to Leu-452.

Belongs to the eIF-3 subunit L family. In terms of assembly, component of the eukaryotic translation initiation factor 3 (eIF-3) complex.

The protein resides in the cytoplasm. Its function is as follows. Component of the eukaryotic translation initiation factor 3 (eIF-3) complex, which is involved in protein synthesis of a specialized repertoire of mRNAs and, together with other initiation factors, stimulates binding of mRNA and methionyl-tRNAi to the 40S ribosome. The eIF-3 complex specifically targets and initiates translation of a subset of mRNAs involved in cell proliferation. The protein is Eukaryotic translation initiation factor 3 subunit L of Aspergillus oryzae (strain ATCC 42149 / RIB 40) (Yellow koji mold).